The following is a 192-amino-acid chain: Ion-translocating oxidoreductase complex subunit A (192 aa).

The next 6 helical transmembrane spans lie at 5–25 (LLLLIGTVLVNNFVLVKFLGL), 38–58 (AIGMSMATTFVLTLASVLSFL), 72–92 (LRTMSFILVIAVVVQFTEMLV), 102–122 (ALGIYLPLITTNCAVLGVALL), 134–154 (AIYGFGAAVGFSMVLILFSAM), and 171–191 (AIAMITAGLMSLAFMGFAGLI).

It belongs to the NqrDE/RnfAE family. As to quaternary structure, the complex is composed of six subunits: RnfA, RnfB, RnfC, RnfD, RnfE and RnfG.

Its subcellular location is the cell inner membrane. Part of a membrane-bound complex that couples electron transfer with translocation of ions across the membrane. The protein is Ion-translocating oxidoreductase complex subunit A of Shewanella denitrificans (strain OS217 / ATCC BAA-1090 / DSM 15013).